The sequence spans 630 residues: Cytochrome B pre-mRNA-processing protein 2 (630 aa).

It is found in the mitochondrion. In terms of biological role, appears to be specifically required for the splicing of the terminal intron (bI5) of the cytochrome b pre-mRNA. Can also stimulates the splicing of the omega intron of the precursor of large ribosomal RNA. The polypeptide is Cytochrome B pre-mRNA-processing protein 2 (CBP2) (Saccharomyces paradoxus (Yeast)).